Reading from the N-terminus, the 118-residue chain is Large ribosomal subunit protein bL20 (118 aa).

The protein belongs to the bacterial ribosomal protein bL20 family.

Its function is as follows. Binds directly to 23S ribosomal RNA and is necessary for the in vitro assembly process of the 50S ribosomal subunit. It is not involved in the protein synthesizing functions of that subunit. The polypeptide is Large ribosomal subunit protein bL20 (Thermotoga petrophila (strain ATCC BAA-488 / DSM 13995 / JCM 10881 / RKU-1)).